The primary structure comprises 564 residues: Kelch repeat and BTB domain-containing protein 1 (564 aa).

Residues 21–88 form the BTB domain; the sequence is CDINIVINDE…IYGIPLSLTN (68 aa). Kelch repeat units lie at residues 252–297, 298–346, 347–395, 397–441, 442–492, and 494–539; these read IELI…VLDN, IIYM…ADDE, YIYC…MLNG, IYVI…VHDG, KIYI…SAHN, and LYVG…CEPI.

It belongs to the poxviruses Kelch family. Interacts (via BTB domain) with host CUL3.

The protein localises to the host cytoplasm. Its function is as follows. Probable substrate-specific adapter of CUL3-containing E3 ubiquitin-protein ligases which mediate the ubiquitination and subsequent proteasomal degradation of host target proteins. The protein is Kelch repeat and BTB domain-containing protein 1 (KBTB1) of Homo sapiens (Human).